Here is a 519-residue protein sequence, read N- to C-terminus: MPMPSRDGGLHPRHHHYGSHSPWSQLLSSPMETPSIKGLYYRRVRKVGALDASPVDLKKEILINVGGRRYLLPWSTLDRFPLSRLSKLRLCRSYEEIVQLCDDYDEDSQEFFFDRSPSAFGVIVSFLAAGKLVLLQEMCALSFQEELAYWGIEEAHLERCCLRKLLRKLEELEELAKLHREDVLRQQRETRRPASHSSRWGLCMNRLREMVENPQSGLPGKVFACLSILFVATTAVSLCVSTMPDLRAEEDQGECSRKCYYIFIVETICVAWFSLEFCLRFVQAQDKCQFFQGPLNIIDILAISPYYVSLAVSEEPPEDGERPSGSSYLEKVGLVLRVLRALRILYVMRLARHSLGLQTLGLTVRRCTREFGLLLLFLAVAITLFSPLVYVAEKESGRVLEFTSIPASYWWAIISMTTVGYGDMVPRSVPGQMVALSSILSGILIMAFPATSIFHTFSHSYLELKKEQEQLQARLRHLQNTGPASECELLDPHVASEHELMNDVNDLILEGPALPIMHM.

Residues 1-25 (MPMPSRDGGLHPRHHHYGSHSPWSQ) form a disordered region. Residues 1-218 (MPMPSRDGGL…EMVENPQSGL (218 aa)) are Cytoplasmic-facing. A helical membrane pass occupies residues 219-240 (PGKVFACLSILFVATTAVSLCV). The Extracellular portion of the chain corresponds to 241 to 261 (STMPDLRAEEDQGECSRKCYY). Residues 262 to 283 (IFIVETICVAWFSLEFCLRFVQ) form a helical membrane-spanning segment. The Cytoplasmic segment spans residues 284–294 (AQDKCQFFQGP). The chain crosses the membrane as a helical span at residues 295 to 314 (LNIIDILAISPYYVSLAVSE). The Extracellular segment spans residues 315 to 328 (EPPEDGERPSGSSY). The helical; Voltage-sensor transmembrane segment at 329-353 (LEKVGLVLRVLRALRILYVMRLARH) threads the bilayer. Residues 354-368 (SLGLQTLGLTVRRCT) are Cytoplasmic-facing. Residues 369 to 390 (REFGLLLLFLAVAITLFSPLVY) traverse the membrane as a helical segment. Residues 391–405 (VAEKESGRVLEFTSI) lie on the Extracellular side of the membrane. The segment at residues 406–417 (PASYWWAIISMT) is an intramembrane region (helical). Residues 418–423 (TVGYGD) carry the Selectivity filter motif. The stretch at 418-425 (TVGYGDMV) is an intramembrane region. The Extracellular portion of the chain corresponds to 426–432 (PRSVPGQ). The helical transmembrane segment at 433–461 (MVALSSILSGILIMAFPATSIFHTFSHSY) threads the bilayer. Topologically, residues 462-519 (LELKKEQEQLQARLRHLQNTGPASECELLDPHVASEHELMNDVNDLILEGPALPIMHM) are cytoplasmic.

It belongs to the potassium channel family. G (TC 1.A.1.2) subfamily. Kv6.4/KCNG4 sub-subfamily. In terms of assembly, heterotetramer with KCNB1. Does not form homomultimer. In terms of tissue distribution, highly expressed in brain, and at lower levels in liver, small intestine and colon.

Its subcellular location is the cell membrane. Its function is as follows. Regulatory subunit of the voltage-gated potassium (Kv) channel which, when coassembled with KCNB1, modulates the kinetics parameters of the heterotetrameric channel namely the time course of activation, deactivation and inactivation and on the voltage-dependence of activation. Potassium channel subunit that does not form functional channels by itself. Reduces the deactivation rate. Modulates the threshold for activation by shifting by approximately 20 mV in hyperpolarizing direction. Markedly changes the inactivation by shifting the voltage dependence of inactivation by approximately 40 mV in hyperpolarizing direction. Acceleratee activation and enhances the time course of activation. The polypeptide is Voltage-gated potassium channel regulatory subunit KCNG4 (Homo sapiens (Human)).